Consider the following 35-residue polypeptide: Dermonecrotic toxin LdSicTox-alpha-1 (35 aa).

H11 is a catalytic residue. 2 residues coordinate Mg(2+): E31 and D33.

Belongs to the arthropod phospholipase D family. Class I subfamily. Mg(2+) is required as a cofactor. Post-translationally, contains 1 disulfide bond. In terms of tissue distribution, expressed by the venom gland.

The protein resides in the secreted. It carries out the reaction an N-(acyl)-sphingosylphosphocholine = an N-(acyl)-sphingosyl-1,3-cyclic phosphate + choline. The enzyme catalyses an N-(acyl)-sphingosylphosphoethanolamine = an N-(acyl)-sphingosyl-1,3-cyclic phosphate + ethanolamine. The catalysed reaction is a 1-acyl-sn-glycero-3-phosphocholine = a 1-acyl-sn-glycero-2,3-cyclic phosphate + choline. It catalyses the reaction a 1-acyl-sn-glycero-3-phosphoethanolamine = a 1-acyl-sn-glycero-2,3-cyclic phosphate + ethanolamine. In terms of biological role, dermonecrotic toxins cleave the phosphodiester linkage between the phosphate and headgroup of certain phospholipids (sphingolipid and lysolipid substrates), forming an alcohol (often choline) and a cyclic phosphate. This toxin acts on sphingomyelin (SM). It may also act on ceramide phosphoethanolamine (CPE), lysophosphatidylcholine (LPC) and lysophosphatidylethanolamine (LPE), but not on lysophosphatidylserine (LPS), and lysophosphatidylglycerol (LPG). It acts by transphosphatidylation, releasing exclusively cyclic phosphate products as second products. Induces dermonecrosis, hemolysis, increased vascular permeability, edema, inflammatory response, and platelet aggregation. The polypeptide is Dermonecrotic toxin LdSicTox-alpha-1 (Loxosceles deserta (Desert recluse spider)).